The following is a 276-amino-acid chain: Short-chain dehydrogenase anuF (276 aa).

Ile18, Asp68, Lys130, Tyr176, Lys180, Val209, and Thr211 together coordinate NADP(+). Tyr176 serves as the catalytic Proton acceptor. Tyr176 (proton donor) is an active-site residue. Lys180 (lowers pKa of active site Tyr) is an active-site residue.

This sequence belongs to the short-chain dehydrogenases/reductases (SDR) family.

The catalysed reaction is (2R,9S)-annullatin H + A = (2R)-annullatin F + AH2. Its function is as follows. Cytochrome P450 monooxygenase; part of the gene cluster that mediates the biosynthesis of annullatin D, an alkylated aromatic polyketide with a fused dihydrobenzofuran lactone ring system that exhibits potent agonistic activities toward the cannabinoid receptors. Within the pathway, anuF is involved in the formation of (2R)-annullatin F from the diastereomer of (2S,9S)-annullatin H (compound 12). The annullatin backbone 2-hydroxymethyl-3-pentylphenol is assembled from one acetyl-CoA starter unit and 5 malonyl-CoA elongation units by cooperation of the highly reducing polyketide synthase anuA, the short-chain dehydrogenase anuB and the oxidoreductase anuC, before being hydroxylated at the C-5 alkyl chain by the cytochrome P450 monooxygenase anuE to form (8S)-annullatin E. The prenyltransferase anuH subsequently installs one isoprenyl group at the benzene ring to form (8S)-annullatin J. Enzymatic or nonenzymatic dihydro-benzofuran ring formation between the prenyl and the phenolic hydroxyl groups in (8S)-annullatin J results in two diastereomers (2S,9S)-annullatin H and compound 12. The intermediate (2S,9S)-annullatin H is then converted to (2S,9S)-annullatin D by the FAD-linked oxidoreductase anuG-catalyzed five-member lactone ring formation. The isomer 12 acts as a substrate for the short-chain dehydrogenase anuF and is oxidized to (2R)-annullatin F, which is subsequently acetylated by an acetyltransferase leading to (2R)-annullatin G formation. The remaining enzymes identified within the cluster, anuD, anuI and anuJ, seem not to be involved in annullatin biosynthesis. This is Short-chain dehydrogenase anuF from Penicillium roqueforti (strain FM164).